Consider the following 99-residue polypeptide: Large ribosomal subunit protein bL27 (99 aa).

A disordered region spans residues 13-65; sequence AHHKGGGSTTNGRNSAGRRLGAKRADGQEVHAGSIIYRQRGTKIHPGKNVGRG.

It belongs to the bacterial ribosomal protein bL27 family.

The chain is Large ribosomal subunit protein bL27 from Lactobacillus delbrueckii subsp. bulgaricus (strain ATCC BAA-365 / Lb-18).